Here is a 147-residue protein sequence, read N- to C-terminus: 16 kDa phloem protein 2 (147 aa).

The 103-residue stretch at 1-103 folds into the C2 domain; sequence MPHGTLEVVL…FVEGSIPPTA (103 aa). Ca(2+) contacts are provided by D20, D26, D73, D75, and D81. Residues 126-147 are disordered; that stretch reads ENRSRGMDEESYGGWKNSEASY.

Ca(2+) serves as cofactor.

Functionally, binds to both sense and antisense RNA. Can also bind sheared DNA and dodecamer DNA with a low affinity. Interacts with mesophyll plasmodesmata to mediate its own cell-to-cell transport and potentiate RNA trafficking. May play a role in plant defense signaling. The polypeptide is 16 kDa phloem protein 2 (Arabidopsis thaliana (Mouse-ear cress)).